The following is a 278-amino-acid chain: Transcriptional regulator ICP22 homolog (278 aa).

Disordered stretches follow at residues 1 to 42 (MFCT…RDTS) and 154 to 229 (CDVS…KRPQ). Positions 1-142 (MFCTSPATRG…PRGEDGFIEA (142 aa)) are IE62-binding. Acidic residues-rich tracts occupy residues 155–169 (DVSDDGGEDDSDDDG) and 183–205 (AESSDGEDFIVEEESEESTDSCE).

It belongs to the herpesviridae ICP22 family. In terms of assembly, interacts with IE62; this interaction modulates the function of IE62. Interacts with several components of host pre-initiation complex including GTF2E1, GTF2H2 and POLR2A; these interactions lead to repression of gene transcription. Interacts with host ASF1A; altering its ability to bind histones. Post-translationally, phosphorylated in vitro by host and by protein kinase ORF47.

It localises to the host cytoplasm. The protein resides in the host nucleus. The protein localises to the virion tegument. Functionally, immediate early (EI) protein that functions as a transcriptional regulator of cellular and viral mRNAs mainly by interacting with several general transcription factors thereby disorganizing the preinitiation complex at certain promoters. May additionally help to regulate levels of histones in virus-infected cells by interacting with host ASF1. By inhibiting host transcriptional program, IE63 plays a major role in the ability of VZV to overcome the innate immune response to the virus. This is Transcriptional regulator ICP22 homolog from Varicella-zoster virus (strain Dumas) (HHV-3).